Reading from the N-terminus, the 254-residue chain is 3-oxo-5-alpha-steroid 4-dehydrogenase 2 (254 aa).

Helical transmembrane passes span 8 to 28 (SPVL…LYVA), 72 to 92 (PLSL…LHYF), 146 to 166 (FSLG…SDYI), and 206 to 226 (LATW…FLGL).

Belongs to the steroid 5-alpha reductase family. Expressed in high levels in the prostate and many other androgen-sensitive tissues.

The protein resides in the microsome membrane. Its subcellular location is the endoplasmic reticulum membrane. It carries out the reaction a 3-oxo-5alpha-steroid + NADP(+) = a 3-oxo-Delta(4)-steroid + NADPH + H(+). The catalysed reaction is 17beta-hydroxy-5alpha-androstan-3-one + NADP(+) = testosterone + NADPH + H(+). It catalyses the reaction 5alpha-pregnane-3,20-dione + NADP(+) = progesterone + NADPH + H(+). In terms of biological role, converts testosterone (T) into 5-alpha-dihydrotestosterone (DHT) and progesterone or corticosterone into their corresponding 5-alpha-3-oxosteroids. It plays a central role in sexual differentiation and androgen physiology. This is 3-oxo-5-alpha-steroid 4-dehydrogenase 2 (SRD5A2) from Homo sapiens (Human).